The chain runs to 242 residues: Biosynthetic peptidoglycan transglycosylase (242 aa).

Residues 19–39 (LMVVLAVFWGGGIALFSVAPV) traverse the membrane as a helical segment.

Belongs to the glycosyltransferase 51 family.

It is found in the cell inner membrane. It catalyses the reaction [GlcNAc-(1-&gt;4)-Mur2Ac(oyl-L-Ala-gamma-D-Glu-L-Lys-D-Ala-D-Ala)](n)-di-trans,octa-cis-undecaprenyl diphosphate + beta-D-GlcNAc-(1-&gt;4)-Mur2Ac(oyl-L-Ala-gamma-D-Glu-L-Lys-D-Ala-D-Ala)-di-trans,octa-cis-undecaprenyl diphosphate = [GlcNAc-(1-&gt;4)-Mur2Ac(oyl-L-Ala-gamma-D-Glu-L-Lys-D-Ala-D-Ala)](n+1)-di-trans,octa-cis-undecaprenyl diphosphate + di-trans,octa-cis-undecaprenyl diphosphate + H(+). It participates in cell wall biogenesis; peptidoglycan biosynthesis. Functionally, peptidoglycan polymerase that catalyzes glycan chain elongation from lipid-linked precursors. The protein is Biosynthetic peptidoglycan transglycosylase of Escherichia coli (strain SMS-3-5 / SECEC).